A 271-amino-acid polypeptide reads, in one-letter code: Carboxy-terminal domain RNA polymerase II polypeptide A small phosphatase 2 (271 aa).

Ser5 bears the Phosphoserine mark. One can recognise an FCP1 homology domain in the interval 97-255 (EDQGRICVVI…LNLIPIFEEL (159 aa)). Asp107 serves as the catalytic 4-aspartylphosphate intermediate. Mg(2+) contacts are provided by Asp107, Asp109, and Asn218. Residue Asp109 is the Proton donor of the active site.

Monomer. Interacts with REST. The cofactor is Mg(2+). Expression is restricted to non-neuronal tissues. Highest expression in pancreas and lowest in liver.

The protein resides in the nucleus. It carries out the reaction O-phospho-L-seryl-[protein] + H2O = L-seryl-[protein] + phosphate. The catalysed reaction is O-phospho-L-threonyl-[protein] + H2O = L-threonyl-[protein] + phosphate. In terms of biological role, preferentially catalyzes the dephosphorylation of 'Ser-5' within the tandem 7 residue repeats in the C-terminal domain (CTD) of the largest RNA polymerase II subunit POLR2A. Negatively regulates RNA polymerase II transcription, possibly by controlling the transition from initiation/capping to processive transcript elongation. Recruited by REST to neuronal genes that contain RE-1 elements, leading to neuronal gene silencing in non-neuronal cells. May contribute to the development of sarcomas. The protein is Carboxy-terminal domain RNA polymerase II polypeptide A small phosphatase 2 (CTDSP2) of Homo sapiens (Human).